Consider the following 216-residue polypeptide: Imidazole glycerol phosphate synthase subunit HisH (216 aa).

One can recognise a Glutamine amidotransferase type-1 domain in the interval 2–216 (RVAIIDYGSG…LIANFLKWKP (215 aa)). Cys-88 acts as the Nucleophile in catalysis. Active-site residues include His-196 and Glu-198.

Heterodimer of HisH and HisF.

The protein localises to the cytoplasm. The catalysed reaction is 5-[(5-phospho-1-deoxy-D-ribulos-1-ylimino)methylamino]-1-(5-phospho-beta-D-ribosyl)imidazole-4-carboxamide + L-glutamine = D-erythro-1-(imidazol-4-yl)glycerol 3-phosphate + 5-amino-1-(5-phospho-beta-D-ribosyl)imidazole-4-carboxamide + L-glutamate + H(+). It carries out the reaction L-glutamine + H2O = L-glutamate + NH4(+). It functions in the pathway amino-acid biosynthesis; L-histidine biosynthesis; L-histidine from 5-phospho-alpha-D-ribose 1-diphosphate: step 5/9. In terms of biological role, IGPS catalyzes the conversion of PRFAR and glutamine to IGP, AICAR and glutamate. The HisH subunit catalyzes the hydrolysis of glutamine to glutamate and ammonia as part of the synthesis of IGP and AICAR. The resulting ammonia molecule is channeled to the active site of HisF. The protein is Imidazole glycerol phosphate synthase subunit HisH of Brucella abortus biovar 1 (strain 9-941).